Consider the following 337-residue polypeptide: Adenosine deaminase (337 aa).

Residues H15 and H17 each coordinate Zn(2+). 3 residues coordinate substrate: H17, D19, and G172. H199 contacts Zn(2+). Residue E202 is the Proton donor of the active site. D279 serves as a coordination point for Zn(2+).

Belongs to the metallo-dependent hydrolases superfamily. Adenosine and AMP deaminases family. Adenosine deaminase subfamily. The cofactor is Zn(2+).

It carries out the reaction adenosine + H2O + H(+) = inosine + NH4(+). The enzyme catalyses 2'-deoxyadenosine + H2O + H(+) = 2'-deoxyinosine + NH4(+). Functionally, catalyzes the hydrolytic deamination of adenosine and 2-deoxyadenosine. This Enterococcus faecalis (strain ATCC 700802 / V583) protein is Adenosine deaminase.